Reading from the N-terminus, the 253-residue chain is 5-oxoprolinase subunit A (253 aa).

The protein belongs to the LamB/PxpA family. As to quaternary structure, forms a complex composed of PxpA, PxpB and PxpC.

The enzyme catalyses 5-oxo-L-proline + ATP + 2 H2O = L-glutamate + ADP + phosphate + H(+). Functionally, catalyzes the cleavage of 5-oxoproline to form L-glutamate coupled to the hydrolysis of ATP to ADP and inorganic phosphate. In Bacillus cereus (strain AH187), this protein is 5-oxoprolinase subunit A.